The chain runs to 194 residues: Ion-translocating oxidoreductase complex subunit A (194 aa).

Helical transmembrane passes span 4 to 24 (LVLILVGAILVNNFVLVQFLG), 39 to 59 (IGLALATTFVLTLAAMCSYLL), 72 to 92 (LRTIGFILVIAVVVQFTEMLV), 102 to 122 (VLGIFLPLITTNCIVLGVALL), 135 to 155 (GINGFGAGLGFSLVLVLFAAM), and 172 to 192 (AIGLITAGLMSLAFMGFSGLI).

Belongs to the NqrDE/RnfAE family. As to quaternary structure, the complex is composed of six subunits: RnfA, RnfB, RnfC, RnfD, RnfE and RnfG.

Its subcellular location is the cell inner membrane. Part of a membrane-bound complex that couples electron transfer with translocation of ions across the membrane. The sequence is that of Ion-translocating oxidoreductase complex subunit A from Azotobacter vinelandii (strain DJ / ATCC BAA-1303).